Reading from the N-terminus, the 623-residue chain is Sulfite reductase [NADPH] flavoprotein alpha-component (623 aa).

The disordered stretch occupies residues 1–32; that stretch reads MSFQKNEYSHKNVSEDNNGQGGNPPIASPLND. Residues 87 to 225 form the Flavodoxin-like domain; sequence LTIIFASQTG…AAEEWRKNAL (139 aa). FMN contacts are provided by residues 93–98, 140–143, and 176–185; these read SQTGNA, STNG, and LGDSSYEFFC. The region spanning 258-472 is the FAD-binding FR-type domain; the sequence is QNPYTATLLT…VEHNNNFKLP (215 aa). FAD contacts are provided by residues T346, A380, 410–413, 428–430, Y434, and 443–446; these read RLYS, TVG, and GGAS. NADP(+) contacts are provided by residues 543–544, 549–553, and D585; these read SR and KVYVQ. FAD is bound at residue Y623.

It belongs to the NADPH-dependent sulphite reductase flavoprotein subunit CysJ family. The protein in the N-terminal section; belongs to the flavodoxin family. This sequence in the C-terminal section; belongs to the flavoprotein pyridine nucleotide cytochrome reductase family. In terms of assembly, alpha(8)-beta(8). The alpha component is a flavoprotein, the beta component is a hemoprotein. It depends on FAD as a cofactor. FMN serves as cofactor.

It catalyses the reaction hydrogen sulfide + 3 NADP(+) + 3 H2O = sulfite + 3 NADPH + 4 H(+). It participates in sulfur metabolism; hydrogen sulfide biosynthesis; hydrogen sulfide from sulfite (NADPH route): step 1/1. Its function is as follows. Component of the sulfite reductase complex that catalyzes the 6-electron reduction of sulfite to sulfide. This is one of several activities required for the biosynthesis of L-cysteine from sulfate. The flavoprotein component catalyzes the electron flow from NADPH -&gt; FAD -&gt; FMN to the hemoprotein component. In Vibrio parahaemolyticus serotype O3:K6 (strain RIMD 2210633), this protein is Sulfite reductase [NADPH] flavoprotein alpha-component.